The chain runs to 178 residues: Large ribosomal subunit protein uL13m (178 aa).

It belongs to the universal ribosomal protein uL13 family. In terms of assembly, component of the mitochondrial ribosome large subunit (39S) which comprises a 16S rRNA and about 50 distinct proteins. Interacts with OXA1L.

The protein localises to the mitochondrion. The sequence is that of Large ribosomal subunit protein uL13m (MRPL13) from Bos taurus (Bovine).